A 347-amino-acid chain; its full sequence is Protein RecA (347 aa).

Position 66–73 (66–73) interacts with ATP; the sequence is GPESSGKT.

This sequence belongs to the RecA family.

Its subcellular location is the cytoplasm. Functionally, can catalyze the hydrolysis of ATP in the presence of single-stranded DNA, the ATP-dependent uptake of single-stranded DNA by duplex DNA, and the ATP-dependent hybridization of homologous single-stranded DNAs. It interacts with LexA causing its activation and leading to its autocatalytic cleavage. The sequence is that of Protein RecA from Allochromatium vinosum (Chromatium vinosum).